The primary structure comprises 376 residues: Glutamate 5-kinase (376 aa).

Residue K15 participates in ATP binding. S56, D143, and N155 together coordinate substrate. Residue 175–176 coordinates ATP; it reads SD. Residues 281 to 358 enclose the PUA domain; that stretch reads KGTLTIDAGA…PDVMMILGIS (78 aa).

The protein belongs to the glutamate 5-kinase family.

The protein localises to the cytoplasm. The catalysed reaction is L-glutamate + ATP = L-glutamyl 5-phosphate + ADP. It participates in amino-acid biosynthesis; L-proline biosynthesis; L-glutamate 5-semialdehyde from L-glutamate: step 1/2. In terms of biological role, catalyzes the transfer of a phosphate group to glutamate to form L-glutamate 5-phosphate. In Rhodopseudomonas palustris (strain BisB5), this protein is Glutamate 5-kinase.